We begin with the raw amino-acid sequence, 940 residues long: UvrABC system protein A (940 aa).

ATP is bound at residue 31 to 38; that stretch reads GLSGSGKS. The segment at 252–279 adopts a C4-type zinc-finger fold; sequence CPQCGYSMQELEPRLFSFNNPAGACGTC. ABC transporter domains lie at 309–586 and 606–936; these read WDQK…PNSL and RDPK…RFLK. An ATP-binding site is contributed by 639 to 646; sequence GVSGSGKS. Residues 739–765 form a C4-type zinc finger; sequence CEACQGDGVIKVEMHFLPDVYVPCDVC.

Belongs to the ABC transporter superfamily. UvrA family. Forms a heterotetramer with UvrB during the search for lesions.

It is found in the cytoplasm. In terms of biological role, the UvrABC repair system catalyzes the recognition and processing of DNA lesions. UvrA is an ATPase and a DNA-binding protein. A damage recognition complex composed of 2 UvrA and 2 UvrB subunits scans DNA for abnormalities. When the presence of a lesion has been verified by UvrB, the UvrA molecules dissociate. This Vibrio parahaemolyticus serotype O3:K6 (strain RIMD 2210633) protein is UvrABC system protein A.